Consider the following 402-residue polypeptide: S-adenosylmethionine synthase (402 aa).

Residue His16 coordinates ATP. Asp18 contacts Mg(2+). Glu44 lines the K(+) pocket. L-methionine-binding residues include Glu57 and Gln109. Positions 109–119 (QSAHIAQGVDA) are flexible loop. Residues 174–176 (DTK), Asp252, 258–259 (RK), Ala275, and Lys279 each bind ATP. Asp252 contributes to the L-methionine binding site. Lys283 lines the L-methionine pocket.

Belongs to the AdoMet synthase family. Homotetramer; dimer of dimers. The cofactor is Mg(2+). It depends on K(+) as a cofactor.

The protein localises to the cytoplasm. It catalyses the reaction L-methionine + ATP + H2O = S-adenosyl-L-methionine + phosphate + diphosphate. Its pathway is amino-acid biosynthesis; S-adenosyl-L-methionine biosynthesis; S-adenosyl-L-methionine from L-methionine: step 1/1. Functionally, catalyzes the formation of S-adenosylmethionine (AdoMet) from methionine and ATP. The overall synthetic reaction is composed of two sequential steps, AdoMet formation and the subsequent tripolyphosphate hydrolysis which occurs prior to release of AdoMet from the enzyme. The polypeptide is S-adenosylmethionine synthase (Rhizorhabdus wittichii (strain DSM 6014 / CCUG 31198 / JCM 15750 / NBRC 105917 / EY 4224 / RW1) (Sphingomonas wittichii)).